The sequence spans 484 residues: Monocarboxylate transporter 2 (484 aa).

Over 1–16 (MPAPTAVPPPHPLPPD) the chain is Cytoplasmic. A helical membrane pass occupies residues 17 to 37 (GGWGWVVVGASFISIGFSYAF). At 38 to 60 (PKSVTVFFKDIQEIFRAGHSKVA) the chain is on the extracellular side. Residues 61-81 (WISSIMLAVMYAGGPISSVLV) traverse the membrane as a helical segment. The Cytoplasmic portion of the chain corresponds to 82–87 (NKYGSR). Residues 88–108 (PVVVIGGLLCCTGMILASFST) traverse the membrane as a helical segment. Over 109–116 (SMIQLYLT) the chain is Extracellular. The helical transmembrane segment at 117–137 (IGFISGLGLAFNLQPALTILG) threads the bilayer. Topologically, residues 138–144 (KYFYRRR) are cytoplasmic. The helical transmembrane segment at 145–165 (PLASGLAMTGSPVFLSSLAPF) threads the bilayer. The Extracellular portion of the chain corresponds to 166 to 174 (NQYLFNSYG). Residues 175-195 (LKGSFLILGGIFLHSCVAGSL) traverse the membrane as a helical segment. The Cytoplasmic segment spans residues 196–245 (MRPVGTSQQSPKSKSKVSSRHDSSTKKAPKLTLAQRINMFLDFSLFKHRG). Residues 198–223 (PVGTSQQSPKSKSKVSSRHDSSTKKA) are disordered. The chain crosses the membrane as a helical span at residues 246–266 (FLIYLSGNVIMFLGFFAPVIF). Residues 267–281 (LSPYAKNRGVDDYKA) are Extracellular-facing. Residues 282–302 (AYLLSVMAFVDMFSRPCGGLI) form a helical membrane-spanning segment. The Cytoplasmic segment spans residues 303–311 (ANTRLVRPR). The helical transmembrane segment at 312-332 (IQYFFSLAIVFTGVCHLLCPL) threads the bilayer. The Extracellular portion of the chain corresponds to 333-337 (AESYT). A helical transmembrane segment spans residues 338–358 (ALVVYAIFFGYGFGSVSSILF). The Cytoplasmic segment spans residues 359-372 (ETLMDLVGPARFSS). The helical transmembrane segment at 373–393 (AVGLVTIVECCPVLLGPPLAG) threads the bilayer. Residues 394–405 (KLVDETGEHKYL) lie on the Extracellular side of the membrane. Residues 406–426 (FVASGAIVVLAGIWLFIGNAI) traverse the membrane as a helical segment. Topologically, residues 427–484 (NYRLLAKERKREKARKKKSPNRHSKELESLSKSNQDDVAVRVPQAHRSPSDKERESNI) are cytoplasmic. The tract at residues 437–484 (REKARKKKSPNRHSKELESLSKSNQDDVAVRVPQAHRSPSDKERESNI) is disordered. Residues 438–448 (EKARKKKSPNR) are compositionally biased toward basic residues. Composition is skewed to basic and acidic residues over residues 449–465 (HSKE…DDVA) and 474–484 (SPSDKERESNI).

The protein belongs to the major facilitator superfamily. Monocarboxylate porter (TC 2.A.1.13) family. In terms of assembly, homodimer. Interacts with GRID2IP. Interacts with EMB; interaction mediates SLC16A7 targeting to the plasma membrane. Interacts with isoform 2 of BSG.

The protein localises to the cell membrane. The protein resides in the basolateral cell membrane. It is found in the cytoplasm. The catalysed reaction is 3-methyl-2-oxobutanoate(out) + H(+)(out) = 3-methyl-2-oxobutanoate(in) + H(+)(in). It catalyses the reaction (S)-lactate(in) + H(+)(in) = (S)-lactate(out) + H(+)(out). The enzyme catalyses acetoacetate(out) + H(+)(out) = acetoacetate(in) + H(+)(in). It carries out the reaction (R)-3-hydroxybutanoate(out) + H(+)(out) = (R)-3-hydroxybutanoate(in) + H(+)(in). The catalysed reaction is 4-methyl-2-oxopentanoate(out) + H(+)(out) = 4-methyl-2-oxopentanoate(in) + H(+)(in). It catalyses the reaction pyruvate(out) + H(+)(out) = pyruvate(in) + H(+)(in). The enzyme catalyses (S)-3-hydroxybutanoate(out) + H(+)(out) = (S)-3-hydroxybutanoate(in) + H(+)(in). With respect to regulation, transport activity exhibits steep dependence on substrate concentration. Substrate concentration sensitivity of SLC16A7 arises from the strong inter-subunit cooperativity of the SLC16A7 dimer during transport. Inhibited by AR-C155858. Functionally, proton-coupled monocarboxylate symporter. Catalyzes the rapid transport across the plasma membrane of monocarboxylates such as L-lactate, pyruvate and ketone bodies, acetoacetate, beta-hydroxybutyrate and acetate. Dimerization is functionally required and both subunits work cooperatively in transporting substrate. The chain is Monocarboxylate transporter 2 (SLC16A7) from Meriones unguiculatus (Mongolian jird).